The primary structure comprises 163 residues: Nucleotide-binding protein RER_17110 (163 aa).

It belongs to the YajQ family.

Nucleotide-binding protein. The protein is Nucleotide-binding protein RER_17110 of Rhodococcus erythropolis (strain PR4 / NBRC 100887).